Consider the following 415-residue polypeptide: Fructose-like permease IIC component (415 aa).

Over 1–46 the chain is Cytoplasmic; it reads MAIKKRSATVVPGASGAAAAVKNLQASKSSFWGELPQHVMSGISRM. The PTS EIIC type-2 domain occupies 35–415; that stretch reads LPQHVMSGIS…RKGKLLIDSL (381 aa). Residues 47–67 traverse the membrane as a helical segment; it reads VPTLIMGGVILAFSQLIAYSW. The Periplasmic segment spans residues 68–101; that stretch reads LKIPAEIGIMDALNSGKFSGFDLSLLKFAWLSQS. Residues 102–122 form a helical membrane-spanning segment; it reads FGGVLFGFAIPMFAAFVANSI. Residues 123-126 are Cytoplasmic-facing; that stretch reads GGKL. Residues 127 to 147 traverse the membrane as a helical segment; the sequence is AFPAGFIGGLMSTQPTQLLNF. At 148-157 the chain is on the periplasmic side; sequence DPSTMQWATS. Residues 158-178 form a helical membrane-spanning segment; the sequence is SPVPSTFIGALIISIVAGYLV. Topologically, residues 179–197 are cytoplasmic; it reads KWMNQKIQLPDFLLAFKTT. A helical transmembrane segment spans residues 198–218; that stretch reads FLLPILSAIFVMLAMYYVITP. Residues 219-237 lie on the Periplasmic side of the membrane; it reads FGGWINGGIRTVLTAAGEK. Residues 238 to 258 form a helical membrane-spanning segment; it reads GALMYAMGIAAATAIDLGGPI. Topologically, residues 259-276 are cytoplasmic; it reads NKAAGFVAFSFTTDHVLP. Residues 277 to 297 form a helical membrane-spanning segment; sequence VTARSIAIVIPPIGLGLATII. Topologically, residues 298 to 318 are periplasmic; the sequence is DRRLTGKRLFNAQLYPQGKTA. Residues 319–339 form a helical membrane-spanning segment; sequence MFLAFMGISEGAIPFALESPI. Residues 340 to 341 lie on the Cytoplasmic side of the membrane; sequence TA. Residues 342–362 traverse the membrane as a helical segment; sequence IPSYMVGAIVGSTAAVWLGAV. The Periplasmic segment spans residues 363-378; the sequence is QWFPESAIWAWPLVTN. Residues 379 to 399 traverse the membrane as a helical segment; that stretch reads LGVYMAGIALGAIITALMVVF. Residues 400 to 415 are Cytoplasmic-facing; sequence LRLMMFRKGKLLIDSL.

The protein localises to the cell inner membrane. Functionally, the phosphoenolpyruvate-dependent sugar phosphotransferase system (PTS), a major carbohydrate active -transport system, catalyzes the phosphorylation of incoming sugar substrates concomitant with their translocation across the cell membrane. This chain is Fructose-like permease IIC component (fryC), found in Shigella flexneri.